Here is a 192-residue protein sequence, read N- to C-terminus: Peptide deformylase (192 aa).

Fe cation is bound by residues cysteine 108 and histidine 150. Glutamate 151 is a catalytic residue. Position 154 (histidine 154) interacts with Fe cation.

This sequence belongs to the polypeptide deformylase family. Fe(2+) serves as cofactor.

The catalysed reaction is N-terminal N-formyl-L-methionyl-[peptide] + H2O = N-terminal L-methionyl-[peptide] + formate. Functionally, removes the formyl group from the N-terminal Met of newly synthesized proteins. Requires at least a dipeptide for an efficient rate of reaction. N-terminal L-methionine is a prerequisite for activity but the enzyme has broad specificity at other positions. This Opitutus terrae (strain DSM 11246 / JCM 15787 / PB90-1) protein is Peptide deformylase.